A 178-amino-acid polypeptide reads, in one-letter code: Large ribosomal subunit protein uL6 (178 aa).

Belongs to the universal ribosomal protein uL6 family. As to quaternary structure, part of the 50S ribosomal subunit.

In terms of biological role, this protein binds to the 23S rRNA, and is important in its secondary structure. It is located near the subunit interface in the base of the L7/L12 stalk, and near the tRNA binding site of the peptidyltransferase center. The sequence is that of Large ribosomal subunit protein uL6 from Maridesulfovibrio salexigens (strain ATCC 14822 / DSM 2638 / NCIMB 8403 / VKM B-1763) (Desulfovibrio salexigens).